Consider the following 225-residue polypeptide: NAD(P)H-hydrate epimerase (225 aa).

In terms of domain architecture, YjeF N-terminal spans 9–209 (MQTIDNYTVE…DIGLLTPQDF (201 aa)). (6S)-NADPHX is bound at residue 57–61 (NNGAD). K(+) contacts are provided by asparagine 58 and aspartate 119. (6S)-NADPHX-binding positions include 123-129 (GTGLNNL) and aspartate 152. Threonine 155 contacts K(+).

Belongs to the NnrE/AIBP family. The cofactor is K(+).

It catalyses the reaction (6R)-NADHX = (6S)-NADHX. The enzyme catalyses (6R)-NADPHX = (6S)-NADPHX. Its function is as follows. Catalyzes the epimerization of the S- and R-forms of NAD(P)HX, a damaged form of NAD(P)H that is a result of enzymatic or heat-dependent hydration. This is a prerequisite for the S-specific NAD(P)H-hydrate dehydratase to allow the repair of both epimers of NAD(P)HX. This Leuconostoc kimchii (strain IMSNU 11154 / KCTC 2386 / IH25) protein is NAD(P)H-hydrate epimerase.